We begin with the raw amino-acid sequence, 173 residues long: NADH-ubiquinone oxidoreductase chain 6 (173 aa).

Helical transmembrane passes span 1 to 21 (MTYF…AVAS), 25 to 45 (PYFA…VLVG), 53 to 73 (LVLF…SAAL), 87 to 107 (VLGY…FFWG), and 141 to 161 (GGML…VLEL).

This sequence belongs to the complex I subunit 6 family.

It is found in the mitochondrion membrane. The catalysed reaction is a ubiquinone + NADH + 5 H(+)(in) = a ubiquinol + NAD(+) + 4 H(+)(out). Its function is as follows. Core subunit of the mitochondrial membrane respiratory chain NADH dehydrogenase (Complex I) that is believed to belong to the minimal assembly required for catalysis. Complex I functions in the transfer of electrons from NADH to the respiratory chain. The immediate electron acceptor for the enzyme is believed to be ubiquinone. This is NADH-ubiquinone oxidoreductase chain 6 (MT-ND6) from Carassius auratus (Goldfish).